The primary structure comprises 124 residues: Small ribosomal subunit protein uS12 (124 aa).

The residue at position 89 (Asp89) is a 3-methylthioaspartic acid. A disordered region spans residues 105–124; the sequence is TGVDSRMQGRSKYGTKKPKK.

This sequence belongs to the universal ribosomal protein uS12 family. In terms of assembly, part of the 30S ribosomal subunit. Contacts proteins S8 and S17. May interact with IF1 in the 30S initiation complex.

Functionally, with S4 and S5 plays an important role in translational accuracy. In terms of biological role, interacts with and stabilizes bases of the 16S rRNA that are involved in tRNA selection in the A site and with the mRNA backbone. Located at the interface of the 30S and 50S subunits, it traverses the body of the 30S subunit contacting proteins on the other side and probably holding the rRNA structure together. The combined cluster of proteins S8, S12 and S17 appears to hold together the shoulder and platform of the 30S subunit. The sequence is that of Small ribosomal subunit protein uS12 from Vesicomyosocius okutanii subsp. Calyptogena okutanii (strain HA).